A 420-amino-acid chain; its full sequence is Cysteate-C-fatty acyltransferase (420 aa).

Pyridoxal 5'-phosphate contacts are provided by residues 114–115 (GY), His219, Thr247, and Ala249. Residue Lys250 is modified to N6-(pyridoxal phosphate)lysine.

The protein belongs to the class-II pyridoxal-phosphate-dependent aminotransferase family. The cofactor is pyridoxal 5'-phosphate.

The catalysed reaction is isopentadecanoyl-CoA + L-cysteate + H(+) = 3-oxocapnine + CO2 + CoA. Its pathway is lipid metabolism. In terms of biological role, transferase involved in the biosynthesis of capnine, a sulfonolipid present in the outer membrane of gliding Bacteroidetes and essential for gliding motility. Catalyzes the formation of 3-dehydrocapnine from cysteate and isopentadecanoyl-CoA (13-methyl-myristoyl-CoA). In vitro, products are also detected when 13-methyl-myristic acid is substituted with tridecylic acid, myristic acid, pentadecanoic acid or palmitic acid. In Capnocytophaga ochracea (strain ATCC 27872 / DSM 7271 / CCUG 9716 / JCM 12966 / NCTC 12371 / SS31 / VPI 2845) (Bacteroides ochraceus), this protein is Cysteate-C-fatty acyltransferase.